A 294-amino-acid chain; its full sequence is Cytidine deaminase (294 aa).

CMP/dCMP-type deaminase domains lie at 48 to 168 (DEDA…FGPK) and 186 to 294 (LTGD…VLLA). 89–91 (NME) is a binding site for substrate. Position 102 (His102) interacts with Zn(2+). Glu104 acts as the Proton donor in catalysis. Zn(2+)-binding residues include Cys129 and Cys132.

Belongs to the cytidine and deoxycytidylate deaminase family. Homodimer. Zn(2+) is required as a cofactor.

It carries out the reaction cytidine + H2O + H(+) = uridine + NH4(+). The catalysed reaction is 2'-deoxycytidine + H2O + H(+) = 2'-deoxyuridine + NH4(+). Its function is as follows. This enzyme scavenges exogenous and endogenous cytidine and 2'-deoxycytidine for UMP synthesis. This Escherichia coli O7:K1 (strain IAI39 / ExPEC) protein is Cytidine deaminase.